Reading from the N-terminus, the 200-residue chain is Non-specific lipid transfer protein GPI-anchored 16 (200 aa).

Residues 1 to 20 (MEGLTLIVVMMSSFMLGGQG) form the signal peptide. Cystine bridges form between Cys-27-Cys-72, Cys-38-Cys-56, Cys-57-Cys-98, and Cys-70-Cys-107. A glycan (N-linked (GlcNAc...) asparagine) is linked at Asn-87. The segment at 134–182 (SPGASKAAGTTPTQAPAPDTPADGPTGPTTKSGIRPVDQPMQPTGLAQS) is disordered. Residues 140–163 (AAGTTPTQAPAPDTPADGPTGPTT) are compositionally biased toward low complexity. Thr-177 is lipidated: GPI-anchor amidated threonine. Positions 178-200 (GLAQSSTSPFLPLLFISLILLNL) are cleaved as a propeptide — removed in mature form.

Belongs to the plant LTP family. In terms of tissue distribution, expressed in seedlings, preferentially in hypocotyls and roots. Also observed in siliques.

The protein localises to the cell membrane. Its function is as follows. Essential protein involved in female gametophyte development. Probable lipid transfer protein. The polypeptide is Non-specific lipid transfer protein GPI-anchored 16 (Arabidopsis thaliana (Mouse-ear cress)).